Here is a 65-residue protein sequence, read N- to C-terminus: Probable tautomerase RSp1151 (65 aa).

P2 acts as the Proton acceptor; via imino nitrogen in catalysis.

It belongs to the 4-oxalocrotonate tautomerase family.

The protein is Probable tautomerase RSp1151 of Ralstonia nicotianae (strain ATCC BAA-1114 / GMI1000) (Ralstonia solanacearum).